The primary structure comprises 624 residues: Aeromonas extracellular serine protease (624 aa).

An N-terminal signal peptide occupies residues 1 to 24; that stretch reads MKQTSLALAITALLSTLPSALVQA. A disulfide bridge connects residues Cys-28 and Cys-48. Asn-53 contributes to the Ca(2+) binding site. The 363-residue stretch at 59-421 folds into the Peptidase S8 domain; the sequence is QWYLLNSGQD…GKVRDVKGLE (363 aa). Asp-102 acts as the Charge relay system in catalysis. Ca(2+) is bound at residue Asp-111. The interval 116–140 is disordered; it reads VRPGSKNVVTGSDDPTPTDPDTAHG. His-139 (charge relay system) is an active-site residue. Ca(2+) contacts are provided by Val-150, Asn-152, Ile-154, Thr-156, Asp-321, Leu-322, Gly-324, Met-327, Asn-330, and Cys-350. The cysteines at positions 325 and 350 are disulfide-linked. The active-site Charge relay system is the Ser-360. Residues 456 to 622 form the P/Homo B domain; that stretch reads LPPLVQLPWQ…SLRVLGHDAN (167 aa). 6 residues coordinate Ca(2+): Asp-478, Asp-512, Asp-577, Ala-579, Asn-602, and Asn-603.

It belongs to the peptidase S8 family. Furin subfamily. As to quaternary structure, forms a complex with the chaperone ORF2 in the periplasm. After translocation of the ASP-ORF2 complex from the periplasm to the extracellular space, the complex is dissociated in a pH-dependent manner. Requires Ca(2+) as cofactor.

Its subcellular location is the periplasm. It localises to the secreted. It carries out the reaction Cleavage of -Lys-Lys-|-Xaa and -Lys-Arg-|-Xaa bonds.. With respect to regulation, folding, maturation and production of the active form of the protease by the cell requires a protein (ORF2), encoded just downstream of asp, which acts as a chaperone. Formation of a complex with ORF2 in the periplasm also inactivates the protease activity and likely protects ASP from intrinsic proteases. In vitro, protease activity is inhibited by human alpha-2-macroglobulin, suggesting that this inhibitor can impede ASP virulence activities in A.sobria infection sites. However, slow ASP inhibition by alpha-2-macroglobulin in plasma may indicate insufficient ASP control in vivo. Activity is inhibited by serine protease inhibitors such as 4-(2-aminoethyl)-benzenesulfonyl fluoride (AEBSF) and diisopropyl fluorophosphate (DFP). Not inhibited by metallo-protease inhibitors and cysteine protease inhibitors. The treatment with reagents to modify sulfhydryl group do not reduce the activity. Exhibits serine protease activity. Preferentially cleaves the peptide bond following two basic residues, one of which is Lys, but does not recognize the bond following a single basic residue. Probable potent virulence factor that cleaves various host plasma proteins, including prekallikrein, prothrombin and fibrinogen. ASP induces vascular leakage and reduction in blood pressure by activating the host plasma kallikrein/kinin system. It affects the host coagulation system during infection through activation of prothrombin to alpha-thrombin and degradation of fibrinogen, which impairs plasma clottability. It also hydrolyzes the complement component C5, releasing the C5a anaphylatoxin, which causes the formation of pus and edema. In addition, degrades its external chaperone ORF2 after the secretion of the ASP-ORF2 complex. The sequence is that of Aeromonas extracellular serine protease from Aeromonas sobria.